The following is a 93-amino-acid chain: Putative membrane protein insertion efficiency factor (93 aa).

Belongs to the UPF0161 family.

The protein localises to the cell inner membrane. Its function is as follows. Could be involved in insertion of integral membrane proteins into the membrane. The protein is Putative membrane protein insertion efficiency factor of Cupriavidus taiwanensis (strain DSM 17343 / BCRC 17206 / CCUG 44338 / CIP 107171 / LMG 19424 / R1) (Ralstonia taiwanensis (strain LMG 19424)).